The following is a 92-amino-acid chain: Small ribosomal subunit protein bS20 (92 aa).

The tract at residues 1 to 24 (MANTTSAKKATRKIARRTDVNKAR) is disordered.

Belongs to the bacterial ribosomal protein bS20 family.

Binds directly to 16S ribosomal RNA. The protein is Small ribosomal subunit protein bS20 of Rhizobium etli (strain ATCC 51251 / DSM 11541 / JCM 21823 / NBRC 15573 / CFN 42).